Reading from the N-terminus, the 271-residue chain is Type III pantothenate kinase (271 aa).

Residue 6–13 participates in ATP binding; it reads DVRNTNIV. 109 to 112 contacts substrate; it reads GADR. Residue aspartate 111 is the Proton acceptor of the active site. Aspartate 131 serves as a coordination point for K(+). Threonine 134 is an ATP binding site. Residue threonine 186 participates in substrate binding.

This sequence belongs to the type III pantothenate kinase family. Homodimer. It depends on NH4(+) as a cofactor. Requires K(+) as cofactor.

The protein localises to the cytoplasm. The catalysed reaction is (R)-pantothenate + ATP = (R)-4'-phosphopantothenate + ADP + H(+). It participates in cofactor biosynthesis; coenzyme A biosynthesis; CoA from (R)-pantothenate: step 1/5. Its function is as follows. Catalyzes the phosphorylation of pantothenate (Pan), the first step in CoA biosynthesis. The polypeptide is Type III pantothenate kinase (Rhodococcus erythropolis (strain PR4 / NBRC 100887)).